The chain runs to 400 residues: ATP-dependent RNA helicase fal-1 (400 aa).

The Q motif signature appears at 26-54; that stretch reads PTFESMSLKESLLRGIYAYGYESPSAVQS. One can recognise a Helicase ATP-binding domain in the interval 57-227; sequence IVQICKGRDT…TKFMTDPVRI (171 aa). 70–77 provides a ligand contact to ATP; it reads AQSGTGKT. The DEAD box motif lies at 175 to 178; the sequence is DEAD. Residues 238–399 enclose the Helicase C-terminal domain; it reads GLKQYFIAVE…EMPMNVADLI (162 aa).

The protein belongs to the DEAD box helicase family. DDX48/FAL1 subfamily.

It localises to the nucleus. It is found in the nucleolus. The enzyme catalyses ATP + H2O = ADP + phosphate + H(+). Its function is as follows. ATP-dependent RNA helicase involved in 40S ribosomal subunit biogenesis. Required for the processing and cleavage of 35S pre-rRNA at sites A0, A1, and A2, leading to mature 18S rRNA. This Neurospora crassa (strain ATCC 24698 / 74-OR23-1A / CBS 708.71 / DSM 1257 / FGSC 987) protein is ATP-dependent RNA helicase fal-1 (fal-1).